A 183-amino-acid polypeptide reads, in one-letter code: Putative 3-methyladenine DNA glycosylase (183 aa).

It belongs to the DNA glycosylase MPG family.

The protein is Putative 3-methyladenine DNA glycosylase of Wolbachia pipientis subsp. Culex pipiens (strain wPip).